Consider the following 329-residue polypeptide: 4-hydroxythreonine-4-phosphate dehydrogenase (329 aa).

Histidine 136 and threonine 137 together coordinate substrate. Residues histidine 166, histidine 211, and histidine 266 each coordinate a divalent metal cation. Substrate is bound by residues lysine 274, asparagine 283, and arginine 292.

Belongs to the PdxA family. Homodimer. Requires Zn(2+) as cofactor. Mg(2+) serves as cofactor. Co(2+) is required as a cofactor.

The protein resides in the cytoplasm. It catalyses the reaction 4-(phosphooxy)-L-threonine + NAD(+) = 3-amino-2-oxopropyl phosphate + CO2 + NADH. It participates in cofactor biosynthesis; pyridoxine 5'-phosphate biosynthesis; pyridoxine 5'-phosphate from D-erythrose 4-phosphate: step 4/5. Its function is as follows. Catalyzes the NAD(P)-dependent oxidation of 4-(phosphooxy)-L-threonine (HTP) into 2-amino-3-oxo-4-(phosphooxy)butyric acid which spontaneously decarboxylates to form 3-amino-2-oxopropyl phosphate (AHAP). This chain is 4-hydroxythreonine-4-phosphate dehydrogenase, found in Pseudomonas putida (strain ATCC 47054 / DSM 6125 / CFBP 8728 / NCIMB 11950 / KT2440).